The following is a 107-amino-acid chain: Quaternary ammonium compound-resistance protein QacG (107 aa).

Transmembrane regions (helical) follow at residues 1–21 (MHYL…SFLK), 26–46 (FTKL…FYFL), 57–77 (ITYA…SVIV), and 84–104 (LISI…NVFG).

Belongs to the drug/metabolite transporter (DMT) superfamily. Small multidrug resistance (SMR) (TC 2.A.7.1) family.

Its subcellular location is the cell membrane. Functionally, multidrug exporter. Is implicated for the resistance to bacteriocidal quaternary ammonium compounds. This Staphylococcus sp. (strain ST94) protein is Quaternary ammonium compound-resistance protein QacG (qacG).